A 342-amino-acid polypeptide reads, in one-letter code: Aquaporin-7 (342 aa).

Topologically, residues 1 to 36 are cytoplasmic; the sequence is MVQTSRHRRSTRGSKMVSWSVMAKIQEILQKKMVRE. Phosphoserine is present on S20. The chain crosses the membrane as a helical span at residues 37–54; that stretch reads FLAEFMSTYVMMVFGLGS. The Extracellular segment spans residues 55 to 67; sequence VAHMVLNKKYGSY. A helical transmembrane segment spans residues 68–85; it reads LGVNLGFGFGVTMGVHVA. Residues 86 to 89 are Cytoplasmic-facing; the sequence is GHIS. The discontinuously helical intramembrane region spans 90-103; the sequence is GAHMNAAVTFANCA. Positions 94–96 match the NPA 1 motif; it reads NAA. Over 104–111 the chain is Cytoplasmic; sequence LGRVPWRK. A helical transmembrane segment spans residues 112 to 132; that stretch reads FPVYVLGQFLGSFLAAATIYT. Topologically, residues 133–167 are extracellular; the sequence is LFYTAILHFSGGQLMVTGPVATAGIFATYLPDHMT. Residues 168-188 traverse the membrane as a helical segment; that stretch reads LWRGFLNEAWLTGMLQLCLFA. Residues 189-200 lie on the Cytoplasmic side of the membrane; it reads ITDQENNAALPG. The chain crosses the membrane as a helical span at residues 201–217; that stretch reads TQALVIGILVVIIGVSL. The Extracellular segment spans residues 218–221; that stretch reads GMNT. The segment at residues 222–235 is an intramembrane region (discontinuously helical); sequence GYAINPSRDLPPRV. The NPA 2 signature appears at 226-228; that stretch reads NPS. Residues 236–253 lie on the Extracellular side of the membrane; sequence FTFIAGWGKEVFSEGENW. The helical transmembrane segment at 254-275 threads the bilayer; it reads WWVPVVAPLLGACLGGIIYLVF. The Cytoplasmic portion of the chain corresponds to 276–342; that stretch reads IGSTTPREPL…LHESMALGHF (67 aa).

Belongs to the MIP/aquaporin (TC 1.A.8) family. As to quaternary structure, homotetramer; each monomer provides an independent glycerol/water pore. Two homotetramers on opposing membranes can dimerize, forming a cell-cell junction. Interacts with PLIN1. In terms of processing, phosphorylation by PKA could prevent the interaction with PLIN1.

It localises to the cell membrane. It is found in the cytoplasmic vesicle membrane. Its subcellular location is the lipid droplet. It carries out the reaction glycerol(in) = glycerol(out). It catalyses the reaction H2O(in) = H2O(out). The catalysed reaction is urea(in) = urea(out). Its activity is regulated as follows. Glycerol transport is regulated by pH, with the porin being permeable to glycerol at pH 7.4 but not at pH 5.5. Water permeability, however, is not influenced by pH. Its function is as follows. Aquaglyceroporins form homotetrameric transmembrane channels, with each monomer independently mediating glycerol and water transport across the plasma membrane along their osmotic gradient. Could also be permeable to urea. Mediates the efflux of glycerol, formed upon triglyceride hydrolysis, to avoid its accumulation in adipocytes and to make it available to other tissues. In the kidney, mediates the reabsorption of glycerol, preventing its loss in urine, again participating to energy homeostasis. In pancreatic beta cells, it also mediates the efflux of glycerol, regulating its intracellular levels. The protein is Aquaporin-7 (AQP7) of Macaca fascicularis (Crab-eating macaque).